Here is a 137-residue protein sequence, read N- to C-terminus: Small heat shock protein IbpA (137 aa).

A sHSP domain is found at 28 to 137; sequence TQSNGGYPPY…AMKPRRIEIK (110 aa).

It belongs to the small heat shock protein (HSP20) family. In terms of assembly, monomer. Forms homomultimers of about 100-150 subunits at optimal growth temperatures. Conformation changes to monomers at high temperatures or high ionic concentrations.

The protein resides in the cytoplasm. Its function is as follows. Associates with aggregated proteins, together with IbpB, to stabilize and protect them from irreversible denaturation and extensive proteolysis during heat shock and oxidative stress. Aggregated proteins bound to the IbpAB complex are more efficiently refolded and reactivated by the ATP-dependent chaperone systems ClpB and DnaK/DnaJ/GrpE. Its activity is ATP-independent. This Pectobacterium atrosepticum (strain SCRI 1043 / ATCC BAA-672) (Erwinia carotovora subsp. atroseptica) protein is Small heat shock protein IbpA.